We begin with the raw amino-acid sequence, 396 residues long: Elongation factor Tu 2 (396 aa).

The tr-type G domain maps to 10–206; it reads KPHCNVGTIG…AVDDYIPQPE (197 aa). A G1 region spans residues 19–26; it reads GHVDHGKT. 19 to 26 is a binding site for GTP; that stretch reads GHVDHGKT. Thr26 contacts Mg(2+). Residues 60 to 64 are G2; it reads GITIS. A G3 region spans residues 81–84; sequence DCPG. GTP contacts are provided by residues 81–85 and 136–139; these read DCPGH and NKCD. The interval 136–139 is G4; it reads NKCD. Residues 174–176 are G5; that stretch reads SAL.

The protein belongs to the TRAFAC class translation factor GTPase superfamily. Classic translation factor GTPase family. EF-Tu/EF-1A subfamily. In terms of assembly, monomer.

It is found in the cytoplasm. The enzyme catalyses GTP + H2O = GDP + phosphate + H(+). Functionally, GTP hydrolase that promotes the GTP-dependent binding of aminoacyl-tRNA to the A-site of ribosomes during protein biosynthesis. This chain is Elongation factor Tu 2, found in Rhodospirillum rubrum (strain ATCC 11170 / ATH 1.1.1 / DSM 467 / LMG 4362 / NCIMB 8255 / S1).